The following is a 946-amino-acid chain: Bifunctional glutamine synthetase adenylyltransferase/adenylyl-removing enzyme (946 aa).

An adenylyl removase region spans residues 1–440; it reads MKPLSSPLQQ…VFNELIGDDE (440 aa). The segment at 449–946 is adenylyl transferase; that stretch reads SEQWRELWQD…ASWQKWLVEE (498 aa).

The protein belongs to the GlnE family. Requires Mg(2+) as cofactor.

The enzyme catalyses [glutamine synthetase]-O(4)-(5'-adenylyl)-L-tyrosine + phosphate = [glutamine synthetase]-L-tyrosine + ADP. The catalysed reaction is [glutamine synthetase]-L-tyrosine + ATP = [glutamine synthetase]-O(4)-(5'-adenylyl)-L-tyrosine + diphosphate. In terms of biological role, involved in the regulation of glutamine synthetase GlnA, a key enzyme in the process to assimilate ammonia. When cellular nitrogen levels are high, the C-terminal adenylyl transferase (AT) inactivates GlnA by covalent transfer of an adenylyl group from ATP to specific tyrosine residue of GlnA, thus reducing its activity. Conversely, when nitrogen levels are low, the N-terminal adenylyl removase (AR) activates GlnA by removing the adenylyl group by phosphorolysis, increasing its activity. The regulatory region of GlnE binds the signal transduction protein PII (GlnB) which indicates the nitrogen status of the cell. In Shigella boydii serotype 4 (strain Sb227), this protein is Bifunctional glutamine synthetase adenylyltransferase/adenylyl-removing enzyme.